Here is a 181-residue protein sequence, read N- to C-terminus: Anthrone oxygenase encC (181 aa).

4 consecutive transmembrane segments (helical) span residues 1-21, 65-81, 88-108, and 153-173; these read MASV…WLSG, QIAA…AWCA, LLYG…LLFM, and FLAG…LFAA.

This sequence belongs to the anthrone oxygenase family. Endocrocin is specifically produced in conidia.

Its subcellular location is the membrane. Anthrone oxygenase; part of the gene cluster that mediates the biosynthesis of endocrocin, a simple anthraquinone interesting for many biotechnological applications. The pathway begins with the synthesis of atrochrysone thioester by the polyketide synthase (PKS) encA. The atrochrysone carboxyl ACP thioesterase encB then breaks the thioester bond and releases the atrochrysone carboxylic acid from encA. The atrochrysone carboxylic acid is then converted to endocrocin anthrone which is further oxidized into endocrocin by the anthrone oxygenase encC. The exact function of encD has not been identified yet, but it negatively regulates endocrocin production, likely through the modification of endocrocin itself. This chain is Anthrone oxygenase encC, found in Aspergillus fumigatus (strain ATCC MYA-4609 / CBS 101355 / FGSC A1100 / Af293) (Neosartorya fumigata).